We begin with the raw amino-acid sequence, 513 residues long: ATP synthase subunit alpha (513 aa).

ATP is bound at residue 169–176; sequence GDRQTGKT.

This sequence belongs to the ATPase alpha/beta chains family. As to quaternary structure, F-type ATPases have 2 components, CF(1) - the catalytic core - and CF(0) - the membrane proton channel. CF(1) has five subunits: alpha(3), beta(3), gamma(1), delta(1), epsilon(1). CF(0) has three main subunits: a(1), b(2) and c(9-12). The alpha and beta chains form an alternating ring which encloses part of the gamma chain. CF(1) is attached to CF(0) by a central stalk formed by the gamma and epsilon chains, while a peripheral stalk is formed by the delta and b chains.

Its subcellular location is the cell inner membrane. It carries out the reaction ATP + H2O + 4 H(+)(in) = ADP + phosphate + 5 H(+)(out). Functionally, produces ATP from ADP in the presence of a proton gradient across the membrane. The alpha chain is a regulatory subunit. The chain is ATP synthase subunit alpha from Salmonella arizonae (strain ATCC BAA-731 / CDC346-86 / RSK2980).